Consider the following 141-residue polypeptide: Nucleoside triphosphatase NudI (141 aa).

Positions 1–141 (MRQRTIVCPI…RLTFTQKGLL (141 aa)) constitute a Nudix hydrolase domain. The short motif at 38–59 (GGMEPGETMEEALRREIREELG) is the Nudix box element.

Belongs to the Nudix hydrolase family. NudI subfamily. In terms of assembly, monomer. Requires Mg(2+) as cofactor.

It carries out the reaction a ribonucleoside 5'-triphosphate + H2O = a ribonucleoside 5'-phosphate + diphosphate + H(+). The catalysed reaction is a 2'-deoxyribonucleoside 5'-triphosphate + H2O = a 2'-deoxyribonucleoside 5'-phosphate + diphosphate + H(+). The enzyme catalyses dUTP + H2O = dUMP + diphosphate + H(+). It catalyses the reaction dTTP + H2O = dTMP + diphosphate + H(+). It carries out the reaction dCTP + H2O = dCMP + diphosphate + H(+). Catalyzes the hydrolysis of nucleoside triphosphates, with a preference for pyrimidine deoxynucleoside triphosphates (dUTP, dTTP and dCTP). This is Nucleoside triphosphatase NudI from Enterobacter sp. (strain 638).